The chain runs to 162 residues: uncharacterized protein (162 aa).

Residues 5 to 25 traverse the membrane as a helical segment; the sequence is IIILFLFTAILCSITLCGCIS.

It is found in the membrane. This is an uncharacterized protein from Methanocaldococcus jannaschii (strain ATCC 43067 / DSM 2661 / JAL-1 / JCM 10045 / NBRC 100440) (Methanococcus jannaschii).